A 72-amino-acid chain; its full sequence is Conotoxin 3 (72 aa).

The signal sequence occupies residues 1–22 (MKLTCVVIVAVLLLTACQLITA). A propeptide spanning residues 23–46 (DDSRGTQEHRALRSDTKLSMLTLR) is cleaved from the precursor. 3 disulfides stabilise this stretch: C47/C61, C54/C64, and C60/C71.

This sequence belongs to the conotoxin O1 superfamily. Expressed by the venom duct.

Its subcellular location is the secreted. The chain is Conotoxin 3 from Conus striatus (Striated cone).